Here is a 320-residue protein sequence, read N- to C-terminus: tRNA dimethylallyltransferase (320 aa).

Residue 17–24 (GPTASGKT) coordinates ATP. 19 to 24 (TASGKT) lines the substrate pocket. Interaction with substrate tRNA stretches follow at residues 42 to 45 (DSAL), 166 to 170 (QRIQR), and 249 to 254 (RCVGYR).

It belongs to the IPP transferase family. In terms of assembly, monomer. Requires Mg(2+) as cofactor.

It carries out the reaction adenosine(37) in tRNA + dimethylallyl diphosphate = N(6)-dimethylallyladenosine(37) in tRNA + diphosphate. In terms of biological role, catalyzes the transfer of a dimethylallyl group onto the adenine at position 37 in tRNAs that read codons beginning with uridine, leading to the formation of N6-(dimethylallyl)adenosine (i(6)A). The chain is tRNA dimethylallyltransferase from Herminiimonas arsenicoxydans.